A 420-amino-acid chain; its full sequence is Serine hydroxymethyltransferase (420 aa).

(6S)-5,6,7,8-tetrahydrofolate contacts are provided by residues L121 and 125-127 (GHL). N6-(pyridoxal phosphate)lysine is present on K230. Residues E246 and 354–356 (SPF) each bind (6S)-5,6,7,8-tetrahydrofolate.

The protein belongs to the SHMT family. As to quaternary structure, homodimer. Pyridoxal 5'-phosphate is required as a cofactor.

The protein localises to the cytoplasm. It carries out the reaction (6R)-5,10-methylene-5,6,7,8-tetrahydrofolate + glycine + H2O = (6S)-5,6,7,8-tetrahydrofolate + L-serine. It functions in the pathway one-carbon metabolism; tetrahydrofolate interconversion. Its pathway is amino-acid biosynthesis; glycine biosynthesis; glycine from L-serine: step 1/1. Its function is as follows. Catalyzes the reversible interconversion of serine and glycine with tetrahydrofolate (THF) serving as the one-carbon carrier. This reaction serves as the major source of one-carbon groups required for the biosynthesis of purines, thymidylate, methionine, and other important biomolecules. Also exhibits THF-independent aldolase activity toward beta-hydroxyamino acids, producing glycine and aldehydes, via a retro-aldol mechanism. The protein is Serine hydroxymethyltransferase of Rickettsia akari (strain Hartford).